The following is a 1221-amino-acid chain: Deubiquitinating protein VCPIP1 (1221 aa).

Pro residues predominate over residues 1 to 19 (MSQPPPPPPLPPPPPPPEA). Residues 1–40 (MSQPPPPPPLPPPPPPPEAPQTSSSLAAAATPGGLSKRRD) are disordered. The OTU domain occupies 207–360 (LIPVHVDGDG…RNHYIPLVGI (154 aa)). The active site involves D215. Catalysis depends on C218, which acts as the Nucleophile. Residue H353 is part of the active site. K407 bears the N6-acetyllysine mark. Disordered regions lie at residues 724–778 (SVMQ…KIRI) and 988–1009 (EATT…GSGG). 2 positions are modified to phosphoserine: S746 and S756. The span at 754–770 (PSSAPATPTKAPYSPTT) shows a compositional bias: low complexity. Residue T762 is modified to Phosphothreonine. S767, S993, S997, and S1076 each carry phosphoserine. Disordered stretches follow at residues 1117–1177 (ASMD…TDSR) and 1189–1221 (RSKA…MDHS). A compositionally biased stretch (polar residues) spans 1143–1156 (VSSSVRPGNLQTGL). Residues 1162-1173 (LTGGTENLNTET) show a composition bias toward low complexity. Residues S1197 and S1206 each carry the phosphoserine modification. Positions 1198–1208 (MEEPEEMDSQD) are enriched in acidic residues. Residues 1209-1221 (AETTNTTEPMDHS) show a composition bias toward polar residues.

As to quaternary structure, binds VCP and the ternary complex containing STX5A, NSFL1C and VCP. In terms of processing, phosphorylated at Ser-1206 by ATM or ATR following induction of covalent DNA-protein cross-links (DPCs). As to expression, widely expressed.

It is found in the nucleus. The protein localises to the cytoplasm. Its subcellular location is the endoplasmic reticulum. The protein resides in the golgi apparatus. It localises to the golgi stack. The enzyme catalyses Thiol-dependent hydrolysis of ester, thioester, amide, peptide and isopeptide bonds formed by the C-terminal Gly of ubiquitin (a 76-residue protein attached to proteins as an intracellular targeting signal).. In terms of biological role, deubiquitinating enzyme involved in DNA repair and reassembly of the Golgi apparatus and the endoplasmic reticulum following mitosis. Necessary for VCP-mediated reassembly of Golgi stacks after mitosis. Plays a role in VCP-mediated formation of transitional endoplasmic reticulum (tER). Mediates dissociation of the ternary complex containing STX5A, NSFL1C and VCP. Also involved in DNA repair following phosphorylation by ATM or ATR: acts by catalyzing deubiquitination of SPRTN, thereby promoting SPRTN recruitment to chromatin and subsequent proteolytic cleavage of covalent DNA-protein cross-links (DPCs). Hydrolyzes 'Lys-11'- and 'Lys-48'-linked polyubiquitin chains. The polypeptide is Deubiquitinating protein VCPIP1 (Rattus norvegicus (Rat)).